An 881-amino-acid polypeptide reads, in one-letter code: Alanine--tRNA ligase (881 aa).

This sequence belongs to the class-II aminoacyl-tRNA synthetase family.

It localises to the cytoplasm. It carries out the reaction tRNA(Ala) + L-alanine + ATP = L-alanyl-tRNA(Ala) + AMP + diphosphate. Functionally, catalyzes the attachment of alanine to tRNA(Ala) in a two-step reaction: alanine is first activated by ATP to form Ala-AMP and then transferred to the acceptor end of tRNA(Ala). Also edits incorrectly charged Ser-tRNA(Ala) and Gly-tRNA(Ala) via its editing domain. In Lacticaseibacillus paracasei (strain ATCC 334 / BCRC 17002 / CCUG 31169 / CIP 107868 / KCTC 3260 / NRRL B-441) (Lactobacillus paracasei), this protein is Alanine--tRNA ligase (alaS).